Consider the following 584-residue polypeptide: Arginine--tRNA ligase (584 aa).

Positions 126–136 (PNIAKEMHVGH) match the 'HIGH' region motif.

This sequence belongs to the class-I aminoacyl-tRNA synthetase family. As to quaternary structure, monomer.

It localises to the cytoplasm. It catalyses the reaction tRNA(Arg) + L-arginine + ATP = L-arginyl-tRNA(Arg) + AMP + diphosphate. The sequence is that of Arginine--tRNA ligase from Nostoc punctiforme (strain ATCC 29133 / PCC 73102).